The chain runs to 360 residues: DAZ-associated protein 1 (360 aa).

RRM domains are found at residues 10–97 (GKLF…RSRP) and 114–191 (NKIF…RAEP). 2 disordered regions span residues 73 to 116 (HTLD…SNKI) and 184 to 345 (VEVK…DFPF). 2 stretches are compositionally biased toward basic and acidic residues: residues 91–112 (QPERSRPREGWQQKEPRTENSR) and 184–195 (VEVKRAEPRDSK). Positions 203-231 (GSNQWGSRAMQSTANGWTGQPPQTWQGYS) are enriched in polar residues. Residues 242-253 (TIGGYGQPAGRG) show a composition bias toward gly residues. Residues 271-301 (GPFPPPQGFPPGYATPPPFGYGYGPPPPPPD) are compositionally biased toward pro residues. The span at 328–345 (QSAQDLSKPPSGQQDFPF) shows a compositional bias: polar residues.

As to quaternary structure, component of a mRNP complex, at least composed of DAZAP1, IGF2BP3-A, STAU and VgRBP60. Binds to the 3'-UTR of Vg1 mRNA. Interacts with profilin, a protein involved in actin assembly. Interacts with VgRBP71. As to expression, expressed in oocytes.

The protein localises to the cytoplasm. RNA-binding protein, which is required during gametogenesis. May be involved in the actin-dependent anchoring of Vg1 mRNA in the vegetal cortex of the oocyte. In Xenopus laevis (African clawed frog), this protein is DAZ-associated protein 1 (dazap1).